We begin with the raw amino-acid sequence, 47 residues long: Delta-stichotoxin-Hcr1d (47 aa).

3 disulfides stabilise this stretch: Cys3–Cys43, Cys5–Cys33, and Cys26–Cys44.

The protein belongs to the sea anemone sodium channel inhibitory toxin family. Type II subfamily.

The protein resides in the secreted. It is found in the nematocyst. Functionally, binds to site 3 of voltage-gated sodium channels and inhibits the inactivation process. The chain is Delta-stichotoxin-Hcr1d from Radianthus crispa (Leathery sea anemone).